The sequence spans 410 residues: Regulator of microtubule dynamics protein 2 (410 aa).

A helical membrane pass occupies residues 10–27; sequence ILGIVVGTAGISLLLLWY. Residues 71 to 109 adopt a coiled-coil conformation; sequence RQLQILEKLNELLTHMEELKEEIRVLKEAIPKLEEYIQG. A Phosphoserine modification is found at Ser121. A compositionally biased stretch (basic residues) spans 122–131; that stretch reads PQHRARKRRL. The tract at residues 122-153 is disordered; that stretch reads PQHRARKRRLATVQSSATSNSSEEAESEGGYV. The residue at position 139 (Thr139) is a Phosphothreonine. Tyr152 carries the post-translational modification Phosphotyrosine. Phosphothreonine is present on residues Thr154 and Thr157.

It belongs to the RMDN family. As to quaternary structure, interacts with microtubules.

It is found in the membrane. It localises to the cytoplasm. Its subcellular location is the cytoskeleton. The protein localises to the spindle. The protein resides in the spindle pole. This Bos taurus (Bovine) protein is Regulator of microtubule dynamics protein 2 (RMDN2).